The primary structure comprises 214 residues: Calcineurin B-like protein 8 (214 aa).

4 consecutive EF-hand domains span residues 35 to 70 (EIEA…RNGS), 71 to 106 (MQNL…FHPY), 108 to 143 (PEHE…LLGE), and 152 to 187 (SIEA…NPSI). Positions 165, 167, 169, 171, and 176 each coordinate Ca(2+). The residue at position 205 (S205) is a Phosphoserine.

The protein belongs to the calcineurin regulatory subunit family. Interacts with CIPK23. Interacts with CIPK14 at the cell membrane exclusively.

The protein resides in the cytoplasm. Its subcellular location is the nucleus. It localises to the cell membrane. Its function is as follows. Acts as a calcium sensor. CBL proteins interact with CIPK serine-threonine protein kinases. Binding of a CBL protein to the regulatory NAF domain of a CIPK protein lead to the activation of the kinase in a calcium-dependent manner. The chain is Calcineurin B-like protein 8 (CBL8) from Arabidopsis thaliana (Mouse-ear cress).